A 490-amino-acid polypeptide reads, in one-letter code: Katanin p60 ATPase-containing subunit A-like 1 (490 aa).

An N-acetylmethionine modification is found at Met1. Residues Pro96–Asp182 form a disordered region. Residues Pro116–Met127 are compositionally biased toward basic and acidic residues. Low complexity predominate over residues Ala128–Ala139. A compositionally biased stretch (basic and acidic residues) spans Ser143–Met169. Ser174 carries the phosphoserine modification. Gly248–Thr255 provides a ligand contact to ATP.

The protein belongs to the AAA ATPase family. Katanin p60 subunit A1 subfamily. A-like 1 sub-subfamily. In terms of assembly, interacts with KATNB1 and KATNBL1.

It localises to the cytoplasm. Its subcellular location is the cytoskeleton. The protein resides in the spindle pole. It is found in the spindle. It catalyses the reaction n ATP + n H2O + a microtubule = n ADP + n phosphate + (n+1) alpha/beta tubulin heterodimers.. Functionally, regulates microtubule dynamics in Sertoli cells, a process that is essential for spermiogenesis and male fertility. Severs microtubules in an ATP-dependent manner, promoting rapid reorganization of cellular microtubule arrays. Has microtubule-severing activity in vitro. This is Katanin p60 ATPase-containing subunit A-like 1 from Oryctolagus cuniculus (Rabbit).